The chain runs to 290 residues: MTNSYLAFPKFDPVIFSIGPVSLHWYGLMYLVGFVFAMWLAVRRANKPGSGWTKDEVENLLYAGFLGVFVGGRVGYVLFYNLPLFMENPLYLFKVWDGGMSFHGGLMGVILVMFWFARRTKRTFFQVSDFIAPLIPFGLGAGRLGNFINGELWGRVTTDTPWAMLFPSSRAEDVALAAADPKLLPILNQYGVLPRHPSQLYELLLEGVVLFIILNLFIRKPRPMGAVSGLFLIGYGAFRIIVEAFRQPDAQLGLFDGVISMGQILSVPMVVAGIIMMIWAYRRRPQQQLS.

Helical transmembrane passes span 21-41 (VSLH…MWLA), 60-80 (LLYA…VLFY), 96-116 (WDGG…MFWF), 130-150 (FIAP…FING), 198-218 (SQLY…NLFI), 225-245 (GAVS…VEAF), and 258-278 (VISM…IMMI). A 1,2-diacyl-sn-glycero-3-phospho-(1'-sn-glycerol) is bound at residue R143.

This sequence belongs to the Lgt family.

It is found in the cell inner membrane. It carries out the reaction L-cysteinyl-[prolipoprotein] + a 1,2-diacyl-sn-glycero-3-phospho-(1'-sn-glycerol) = an S-1,2-diacyl-sn-glyceryl-L-cysteinyl-[prolipoprotein] + sn-glycerol 1-phosphate + H(+). It participates in protein modification; lipoprotein biosynthesis (diacylglyceryl transfer). Catalyzes the transfer of the diacylglyceryl group from phosphatidylglycerol to the sulfhydryl group of the N-terminal cysteine of a prolipoprotein, the first step in the formation of mature lipoproteins. In Serratia proteamaculans (strain 568), this protein is Phosphatidylglycerol--prolipoprotein diacylglyceryl transferase.